The primary structure comprises 568 residues: DNA ligase 2 (568 aa).

Glu-254 lines the ATP pocket. The active-site N6-AMP-lysine intermediate is Lys-256. Residues Arg-261, Arg-276, Glu-306, Phe-346, Arg-425, and Lys-431 each contribute to the ATP site.

This sequence belongs to the ATP-dependent DNA ligase family. Mg(2+) serves as cofactor.

The catalysed reaction is ATP + (deoxyribonucleotide)n-3'-hydroxyl + 5'-phospho-(deoxyribonucleotide)m = (deoxyribonucleotide)n+m + AMP + diphosphate.. DNA ligase that seals nicks in double-stranded DNA during DNA replication, DNA recombination and DNA repair. The polypeptide is DNA ligase 2 (Methanosarcina acetivorans (strain ATCC 35395 / DSM 2834 / JCM 12185 / C2A)).